A 496-amino-acid polypeptide reads, in one-letter code: Glutamate--tRNA ligase (496 aa).

Positions 10–20 match the 'HIGH' region motif; sequence PSPTGPLHIGG. Residues 251–255 carry the 'KMSKS' region motif; the sequence is KMSKR. Residue Lys-254 participates in ATP binding.

It belongs to the class-I aminoacyl-tRNA synthetase family. Glutamate--tRNA ligase type 1 subfamily. In terms of assembly, monomer.

Its subcellular location is the cytoplasm. The enzyme catalyses tRNA(Glu) + L-glutamate + ATP = L-glutamyl-tRNA(Glu) + AMP + diphosphate. Its function is as follows. Catalyzes the attachment of glutamate to tRNA(Glu) in a two-step reaction: glutamate is first activated by ATP to form Glu-AMP and then transferred to the acceptor end of tRNA(Glu). In Heliobacterium modesticaldum (strain ATCC 51547 / Ice1), this protein is Glutamate--tRNA ligase.